Here is a 411-residue protein sequence, read N- to C-terminus: Bestrophin homolog 26 (411 aa).

Transmembrane regions (helical) follow at residues 30–50, 73–93, 235–255, and 272–292; these read FTAI…FMVI, SHQE…SSVV, IPIP…YFAV, and TWIT…MGWM.

This sequence belongs to the anion channel-forming bestrophin (TC 1.A.46) family. Calcium-sensitive chloride channel subfamily. Forms oligomers.

It localises to the cell membrane. Forms chloride channels. In Caenorhabditis elegans, this protein is Bestrophin homolog 26 (best-26).